The primary structure comprises 77 residues: Envelope protein US9 homolog (77 aa).

A Di-leucine internalization motif motif is present at residues 12–13 (LL).

It belongs to the alphaherpesvirinae envelope protein US9 family.

The protein is Envelope protein US9 homolog of Chlorocebus aethiops (Green monkey).